Consider the following 149-residue polypeptide: MPLPPDITFDSLALIKMHSQSMKKILEITLAKFTVNLSIVTVYRYLTVRAYLKKNIELELDVLKDIYNIVPLNEEIAIKAAQIEADLMRKGMMPDIEDVLTAATAIYTKSLLITDDSKRYEPMRRFGLDTMPLDKFVKEVELMVEKELI.

The 115-residue stretch at 8–122 (TFDSLALIKM…ITDDSKRYEP (115 aa)) folds into the PINc domain. Residues aspartate 10 and aspartate 98 each contribute to the Mg(2+) site.

The protein belongs to the PINc/VapC protein family. The cofactor is Mg(2+).

In terms of biological role, toxic component of a type II toxin-antitoxin (TA) system. An RNase. The protein is VapC ribonuclease PF0355 of Pyrococcus furiosus (strain ATCC 43587 / DSM 3638 / JCM 8422 / Vc1).